A 195-amino-acid chain; its full sequence is Imidazoleglycerol-phosphate dehydratase (195 aa).

This sequence belongs to the imidazoleglycerol-phosphate dehydratase family.

Its subcellular location is the cytoplasm. The enzyme catalyses D-erythro-1-(imidazol-4-yl)glycerol 3-phosphate = 3-(imidazol-4-yl)-2-oxopropyl phosphate + H2O. The protein operates within amino-acid biosynthesis; L-histidine biosynthesis; L-histidine from 5-phospho-alpha-D-ribose 1-diphosphate: step 6/9. The polypeptide is Imidazoleglycerol-phosphate dehydratase (Geobacillus thermodenitrificans (strain NG80-2)).